A 109-amino-acid polypeptide reads, in one-letter code: Large ribosomal subunit protein uL23 (109 aa).

This sequence belongs to the universal ribosomal protein uL23 family. In terms of assembly, part of the 50S ribosomal subunit. Contacts protein L29, and trigger factor when it is bound to the ribosome.

One of the early assembly proteins it binds 23S rRNA. One of the proteins that surrounds the polypeptide exit tunnel on the outside of the ribosome. Forms the main docking site for trigger factor binding to the ribosome. This is Large ribosomal subunit protein uL23 from Aquifex pyrophilus.